We begin with the raw amino-acid sequence, 256 residues long: Inner membrane transport permease YadH (256 aa).

The Periplasmic segment spans residues 1–22; it reads MMHLYWVALKSIWAKEIHRFMR. Positions 22-251 constitute an ABC transmembrane type-2 domain; that stretch reads RIWVQTLVPP…LICWSLIQRG (230 aa). A helical membrane pass occupies residues 23–43; it reads IWVQTLVPPVITMTLYFIIFG. Over 44–52 the chain is Cytoplasmic; that stretch reads NLIGSRIGD. Residues 53-73 form a helical membrane-spanning segment; sequence MHGFSYMQFIVPGLIMMSVIT. The Periplasmic portion of the chain corresponds to 74–94; sequence NAYANVASSFFGAKFQRNIEE. The helical transmembrane segment at 95–115 threads the bilayer; that stretch reads LLVAPVPTHVIIAGYVGGGVA. Position 116 (R116) is a topological domain, cytoplasmic. Residues 117–137 traverse the membrane as a helical segment; sequence GLFVGILVTAISLFFVPFQVH. Position 138 (S138) is a topological domain, periplasmic. Residues 139–159 traverse the membrane as a helical segment; that stretch reads WVFVALTLVLTAVLFSLAGLL. Residues 160-169 lie on the Cytoplasmic side of the membrane; it reads NGVFAKTFDD. A helical transmembrane segment spans residues 170–190; the sequence is ISLVPTFVLTPLTYLGGVFYS. At 191–223 the chain is on the periplasmic side; it reads LTLLPPFWQGLSHLNPIVYMISGFRYGFLGIND. The chain crosses the membrane as a helical span at residues 224-244; that stretch reads VPLVTTFGVLVVFIVAFYLIC. Over 245–256 the chain is Cytoplasmic; that stretch reads WSLIQRGRGLRS.

The protein belongs to the ABC-2 integral membrane protein family.

It is found in the cell inner membrane. The protein is Inner membrane transport permease YadH (yadH) of Escherichia coli O157:H7.